A 200-amino-acid chain; its full sequence is Holliday junction branch migration complex subunit RuvA (200 aa).

Residues 1–64 are domain I; sequence MIGQLTGLVG…EDAIQLFGFA (64 aa). Residues 65 to 143 are domain II; sequence TTDERDWFRL…KMPGGGGTVS (79 aa). Residues 144–148 form a flexible linker region; it reads APGIV. Positions 149–200 are domain III; sequence SGPSVENDALLALAGLGFRRAEAWPVLSKVLAENENATLDLAIRLSLKDLAR.

It belongs to the RuvA family. Homotetramer. Forms an RuvA(8)-RuvB(12)-Holliday junction (HJ) complex. HJ DNA is sandwiched between 2 RuvA tetramers; dsDNA enters through RuvA and exits via RuvB. An RuvB hexamer assembles on each DNA strand where it exits the tetramer. Each RuvB hexamer is contacted by two RuvA subunits (via domain III) on 2 adjacent RuvB subunits; this complex drives branch migration. In the full resolvosome a probable DNA-RuvA(4)-RuvB(12)-RuvC(2) complex forms which resolves the HJ.

The protein localises to the cytoplasm. In terms of biological role, the RuvA-RuvB-RuvC complex processes Holliday junction (HJ) DNA during genetic recombination and DNA repair, while the RuvA-RuvB complex plays an important role in the rescue of blocked DNA replication forks via replication fork reversal (RFR). RuvA specifically binds to HJ cruciform DNA, conferring on it an open structure. The RuvB hexamer acts as an ATP-dependent pump, pulling dsDNA into and through the RuvAB complex. HJ branch migration allows RuvC to scan DNA until it finds its consensus sequence, where it cleaves and resolves the cruciform DNA. The protein is Holliday junction branch migration complex subunit RuvA of Gluconobacter oxydans (strain 621H) (Gluconobacter suboxydans).